Reading from the N-terminus, the 246-residue chain is MyoD family inhibitor domain-containing protein (246 aa).

The interval 1 to 71 (MSGAGEALAP…WGNPSDGELI (71 aa)) is disordered. Residues 33 to 43 (KCDKDNTEKDI) show a composition bias toward basic and acidic residues. Residues 44-63 (TQATNSHFTHGEMQDQSIWG) show a composition bias toward polar residues. One can recognise an MDFI domain in the interval 74 to 246 (QPQRLPQLQT…MECCGICFPS (173 aa)). 3 positions are modified to phosphoserine: serine 128, serine 140, and serine 143.

The protein belongs to the MDFI family. In terms of assembly, interacts with HAND1; the interaction sequesters HAND1 into the nucleolus and inhibits its activity. Interacts (via C-terminus) with ZIC2. Interacts (via C-terminus) with AXIN1, the histidine-rich region of CCNT1/cyclin-T and weakly with LEF1. Interacts with CCNT2. Interacts with GATA2. Interacts (via C-terminus) with Piezo channel composed of PIEZO1 or PIEZO2; the interaction prolongs Piezo channel inactivation. As to quaternary structure, (Microbial infection) Interacts (via C-terminus) with HIV-1 Tat and Rev. Palmitoylated. As to expression, expressed in lymphatic tissues. Detected in the spleen, thymus, peripheral blood leukocytes as well as prostate, uterus and small intestine. Expressed in lymphatic endothelial cells.

Its subcellular location is the nucleus. The protein resides in the nucleolus. It is found in the cytoplasm. The protein localises to the secreted. Required to control the activity of various transcription factors through their sequestration in the cytoplasm. Retains nuclear Zic proteins ZIC1, ZIC2 and ZIC3 in the cytoplasm and inhibits their transcriptional activation. Modulates the expression from cellular promoters. Binds to the axin complex, resulting in an increase in the level of free beta-catenin. Affects axin regulation of the WNT and JNK signaling pathways. Involved in the development of lymphatic vessel valves. Required to promote lymphatic endothelial cell migration, in a process that involves down-regulation of integrin beta 1 activation and control of cell adhesion to the extracellular matrix. Regulates the activity of mechanosensitive Piezo channel. In terms of biological role, (Microbial infection) Modulates the expression from viral promoters. Down-regulates Tat-dependent transcription of the human immunodeficiency virus type 1 (HIV-1) LTR by interacting with HIV-1 Tat and Rev and impairing their nuclear import, probably by rendering the NLS domains inaccessible to importin-beta. Also stimulates activation of human T-cell leukemia virus type I (HTLV-I) LTR. This is MyoD family inhibitor domain-containing protein from Homo sapiens (Human).